Here is an 80-residue protein sequence, read N- to C-terminus: UPF0291 protein YlaC (80 aa).

This sequence belongs to the UPF0291 family.

The protein resides in the cytoplasm. This is UPF0291 protein YlaC (ylcA) from Lactococcus lactis subsp. lactis (strain IL1403) (Streptococcus lactis).